We begin with the raw amino-acid sequence, 287 residues long: tRNA (guanine(9)-N1)-methyltransferase (287 aa).

The segment at 1-27 (MSDTSDLVDGKWQRLPPVPEGMSKSQW) is disordered. An SAM-dependent MTase TRM10-type domain is found at 79 to 272 (EPRVNRDQVA…SVIPSRKLDP (194 aa)). Residues 179 to 180 (LT), G199, 203 to 207 (DKNRH), C211, L225, and 237 to 239 (KVL) contribute to the S-adenosyl-L-methionine site. The active-site Proton acceptor is D203. Basic and acidic residues predominate over residues 268–278 (RKLDPVKEKEQ). The segment at 268–287 (RKLDPVKEKEQQQQQQQQQQ) is disordered.

It belongs to the class IV-like SAM-binding methyltransferase superfamily. TRM10 family. Monomer.

It localises to the cytoplasm. Its subcellular location is the nucleus. It carries out the reaction guanosine(9) in tRNA + S-adenosyl-L-methionine = N(1)-methylguanosine(9) in tRNA + S-adenosyl-L-homocysteine + H(+). Its function is as follows. S-adenosyl-L-methionine-dependent guanine N(1)-methyltransferase that catalyzes the formation of N(1)-methylguanine at position 9 (m1G9) in cytoplasmic tRNA. The chain is tRNA (guanine(9)-N1)-methyltransferase from Candida glabrata (strain ATCC 2001 / BCRC 20586 / JCM 3761 / NBRC 0622 / NRRL Y-65 / CBS 138) (Yeast).